The primary structure comprises 357 residues: 4-hydroxyphenylpyruvate dioxygenase (357 aa).

2 consecutive VOC domains span residues 17–137 (GFEF…LVDR) and 165–316 (YIDH…IFTD). Fe cation is bound by residues His168, His246, and Glu325.

Belongs to the 4HPPD family. As to quaternary structure, homotetramer. Requires Fe cation as cofactor.

It catalyses the reaction 3-(4-hydroxyphenyl)pyruvate + O2 = homogentisate + CO2. The protein operates within amino-acid degradation; L-phenylalanine degradation; acetoacetate and fumarate from L-phenylalanine: step 3/6. This chain is 4-hydroxyphenylpyruvate dioxygenase (hpd), found in Pseudomonas aeruginosa (strain ATCC 15692 / DSM 22644 / CIP 104116 / JCM 14847 / LMG 12228 / 1C / PRS 101 / PAO1).